Consider the following 160-residue polypeptide: Glucan endo-1,3-beta-glucosidase, acidic isoform PR-O (160 aa).

The active-site Nucleophile is the Glu81.

It belongs to the glycosyl hydrolase 17 family. In terms of processing, the N-terminus is blocked.

It localises to the secreted. The protein localises to the extracellular space. The catalysed reaction is Hydrolysis of (1-&gt;3)-beta-D-glucosidic linkages in (1-&gt;3)-beta-D-glucans.. Implicated in the defense of plants against pathogens. The polypeptide is Glucan endo-1,3-beta-glucosidase, acidic isoform PR-O (PR0) (Nicotiana tabacum (Common tobacco)).